Consider the following 225-residue polypeptide: NAD(P)H-quinone oxidoreductase subunit K, chloroplastic (225 aa).

4 residues coordinate [4Fe-4S] cluster: C43, C44, C108, and C139.

The protein belongs to the complex I 20 kDa subunit family. NDH is composed of at least 16 different subunits, 5 of which are encoded in the nucleus. It depends on [4Fe-4S] cluster as a cofactor.

It is found in the plastid. It localises to the chloroplast thylakoid membrane. It carries out the reaction a plastoquinone + NADH + (n+1) H(+)(in) = a plastoquinol + NAD(+) + n H(+)(out). It catalyses the reaction a plastoquinone + NADPH + (n+1) H(+)(in) = a plastoquinol + NADP(+) + n H(+)(out). In terms of biological role, NDH shuttles electrons from NAD(P)H:plastoquinone, via FMN and iron-sulfur (Fe-S) centers, to quinones in the photosynthetic chain and possibly in a chloroplast respiratory chain. The immediate electron acceptor for the enzyme in this species is believed to be plastoquinone. Couples the redox reaction to proton translocation, and thus conserves the redox energy in a proton gradient. The polypeptide is NAD(P)H-quinone oxidoreductase subunit K, chloroplastic (Nicotiana tabacum (Common tobacco)).